Here is a 280-residue protein sequence, read N- to C-terminus: uncharacterized protein (280 aa).

This sequence to E.coli YgfZ (UP14) and B.aphidicola (subsp. Acyrthosiphon pisum) BU435.

This is an uncharacterized protein from Haemophilus influenzae (strain ATCC 51907 / DSM 11121 / KW20 / Rd).